A 210-amino-acid chain; its full sequence is Cdc42 effector protein 2 (210 aa).

At serine 2 the chain carries N-acetylserine. The CRIB domain maps to 30-44 (ISPPLGDFRHTIHIG). Phosphoserine is present on residues serine 31, serine 101, and serine 141. Positions 124-145 (AQAPPKPPRLHLETPQASPQEA) are disordered.

This sequence belongs to the BORG/CEP family. Interacts with CDC42 and RHOQ, in a GTP-dependent manner, and with SEPT7.

The protein localises to the endomembrane system. It localises to the cytoplasm. Its subcellular location is the cytoskeleton. Functionally, probably involved in the organization of the actin cytoskeleton. May act downstream of CDC42 to induce actin filament assembly leading to cell shape changes. Induces pseudopodia formation in fibroblasts in a CDC42-dependent manner. This Bos taurus (Bovine) protein is Cdc42 effector protein 2 (CDC42EP2).